Here is a 235-residue protein sequence, read N- to C-terminus: Adapter protein MecA (235 aa).

Over residues 113 to 135 (LRQSDKGDIVKSKVSSSDHKDGS) the composition is skewed to basic and acidic residues. The tract at residues 113–136 (LRQSDKGDIVKSKVSSSDHKDGSQ) is disordered.

This sequence belongs to the MecA family. Homodimer.

In terms of biological role, enables the recognition and targeting of unfolded and aggregated proteins to the ClpC protease or to other proteins involved in proteolysis. In Leuconostoc mesenteroides subsp. mesenteroides (strain ATCC 8293 / DSM 20343 / BCRC 11652 / CCM 1803 / JCM 6124 / NCDO 523 / NBRC 100496 / NCIMB 8023 / NCTC 12954 / NRRL B-1118 / 37Y), this protein is Adapter protein MecA.